Consider the following 339-residue polypeptide: Ketol-acid reductoisomerase (NADP(+)) (339 aa).

One can recognise a KARI N-terminal Rossmann domain in the interval 1 to 182 (MRVYYDRDAD…GGGRSGIIET (182 aa)). Residues 24–27 (YGSQ), arginine 48, serine 51, serine 53, and 83–86 (DELQ) each bind NADP(+). Histidine 108 is an active-site residue. Glycine 134 contacts NADP(+). Residues 183-328 (TFREECETDL…EKLRAMMPWI (146 aa)) form the KARI C-terminal knotted domain. Mg(2+) contacts are provided by aspartate 191, glutamate 195, glutamate 227, and glutamate 231. Serine 252 serves as a coordination point for substrate.

This sequence belongs to the ketol-acid reductoisomerase family. Mg(2+) serves as cofactor.

It catalyses the reaction (2R)-2,3-dihydroxy-3-methylbutanoate + NADP(+) = (2S)-2-acetolactate + NADPH + H(+). The catalysed reaction is (2R,3R)-2,3-dihydroxy-3-methylpentanoate + NADP(+) = (S)-2-ethyl-2-hydroxy-3-oxobutanoate + NADPH + H(+). It participates in amino-acid biosynthesis; L-isoleucine biosynthesis; L-isoleucine from 2-oxobutanoate: step 2/4. Its pathway is amino-acid biosynthesis; L-valine biosynthesis; L-valine from pyruvate: step 2/4. Functionally, involved in the biosynthesis of branched-chain amino acids (BCAA). Catalyzes an alkyl-migration followed by a ketol-acid reduction of (S)-2-acetolactate (S2AL) to yield (R)-2,3-dihydroxy-isovalerate. In the isomerase reaction, S2AL is rearranged via a Mg-dependent methyl migration to produce 3-hydroxy-3-methyl-2-ketobutyrate (HMKB). In the reductase reaction, this 2-ketoacid undergoes a metal-dependent reduction by NADPH to yield (R)-2,3-dihydroxy-isovalerate. This chain is Ketol-acid reductoisomerase (NADP(+)), found in Chelativorans sp. (strain BNC1).